The following is a 370-amino-acid chain: Protein-tyrosine sulfotransferase 1 (370 aa).

The Cytoplasmic segment spans residues 1 to 8; the sequence is MVGKLKQN. Residues 9 to 25 form a helical; Signal-anchor for type II membrane protein membrane-spanning segment; that stretch reads LLLACLVISSVTVFYLG. Residues 26–370 are Lumenal-facing; sequence QHAMECHHRI…KEKPQTEQVE (345 aa). An N-linked (GlcNAc...) asparagine glycan is attached at Asn60. 79 to 83 lines the 3'-phosphoadenylyl sulfate pocket; the sequence is RSGTT. Cys97 and Cys157 form a disulfide bridge. Glu100 serves as the catalytic Proton donor/acceptor. Residues 102–106 are interaction with peptide substrate; sequence RVIPR. 3 residues coordinate 3'-phosphoadenylyl sulfate: Arg184, Ser192, and Arg196. A disulfide bridge connects residues Cys226 and Cys234. Tyr239 serves as a coordination point for 3'-phosphoadenylyl sulfate. N-linked (GlcNAc...) asparagine glycosylation is present at Asn262. 3'-phosphoadenylyl sulfate contacts are provided by residues 286–295 and Lys301; that span reads STDQVIKPVN.

Belongs to the protein sulfotransferase family. Homodimer. Can also form heterodimers with TPST2. Post-translationally, N-glycosylated. As to expression, ubiquitous. Detected in heart, brain, lung, liver, spleen, kidney, skeletal muscle and testis.

The protein localises to the golgi apparatus membrane. The catalysed reaction is L-tyrosyl-[protein] + 3'-phosphoadenylyl sulfate = O-sulfo-L-tyrosine-[protein] + adenosine 3',5'-bisphosphate + H(+). Its function is as follows. Catalyzes the O-sulfation of tyrosine residues within acidic motifs of polypeptides, using 3'-phosphoadenylyl sulfate (PAPS) as cosubstrate. This is Protein-tyrosine sulfotransferase 1 (Tpst1) from Mus musculus (Mouse).